The sequence spans 158 residues: Putative ribosomal RNA large subunit methyltransferase H (158 aa).

Residues Leu-76, Gly-107, and 126 to 131 (LSRMTF) contribute to the S-adenosyl-L-methionine site.

The protein belongs to the RNA methyltransferase RlmH family.

The protein resides in the cytoplasm. The catalysed reaction is pseudouridine(1915) in 23S rRNA + S-adenosyl-L-methionine = N(3)-methylpseudouridine(1915) in 23S rRNA + S-adenosyl-L-homocysteine + H(+). Specifically methylates the pseudouridine at position 1915 (m3Psi1915) in 23S rRNA. In Methanocorpusculum labreanum (strain ATCC 43576 / DSM 4855 / Z), this protein is Putative ribosomal RNA large subunit methyltransferase H.